The sequence spans 459 residues: Cysteine--tRNA ligase (459 aa).

C28 contacts Zn(2+). Residues 30 to 40 carry the 'HIGH' region motif; the sequence is ITIYDYCHIGH. Zn(2+) is bound by residues C209, H234, and E238. The short motif at 266–270 is the 'KMSKS' region element; the sequence is KMSKS. K269 lines the ATP pocket.

The protein belongs to the class-I aminoacyl-tRNA synthetase family. Monomer. The cofactor is Zn(2+).

It is found in the cytoplasm. It catalyses the reaction tRNA(Cys) + L-cysteine + ATP = L-cysteinyl-tRNA(Cys) + AMP + diphosphate. The protein is Cysteine--tRNA ligase of Pseudoalteromonas translucida (strain TAC 125).